The sequence spans 498 residues: Type II secretion system protein E (498 aa).

Zn(2+) contacts are provided by cysteine 394, cysteine 397, cysteine 425, and cysteine 428.

This sequence belongs to the GSP E family. Forms homooligomers; most probably hexamers. Interacts with OutL/GspL. Requires Zn(2+) as cofactor.

It is found in the cell inner membrane. The enzyme catalyses ATP + H2O + cellular proteinSide 1 = ADP + phosphate + cellular proteinSide 2.. Functionally, ATPase component of the type II secretion system required for the energy-dependent secretion of extracellular factors such as proteases and toxins from the periplasm. Acts as a molecular motor to provide the energy that is required for assembly of the pseudopilus and the extrusion of substrates generated in the cytoplasm. This chain is Type II secretion system protein E (outE), found in Dickeya dadantii (strain 3937) (Erwinia chrysanthemi (strain 3937)).